The sequence spans 250 residues: MIVDDIYKNNDKKILIKRNMRSRGILSMRSSIMNFNLNKKIGIIAEFKRRSPSGFVNNENTDIFKYYDVIHNSIAGMSILTEERYFNGNQMDVVSVQRYNIPILIKDFVSNDEMIESSYMIGGDVILLIADFLERDKIEMLNRKIKSLGMEALIEFHDLKAFERITTDENVIIGYNRRNLKTLKIEDESFDAQDLIRSTGLLSVLESGITSENILKMPRYNAMLIGSSILSNDSVLKSAGMIKYDGFGYS.

Belongs to the TrpC family.

The catalysed reaction is 1-(2-carboxyphenylamino)-1-deoxy-D-ribulose 5-phosphate + H(+) = (1S,2R)-1-C-(indol-3-yl)glycerol 3-phosphate + CO2 + H2O. The protein operates within amino-acid biosynthesis; L-tryptophan biosynthesis; L-tryptophan from chorismate: step 4/5. The chain is Indole-3-glycerol phosphate synthase from Picrophilus torridus (strain ATCC 700027 / DSM 9790 / JCM 10055 / NBRC 100828 / KAW 2/3).